The primary structure comprises 415 residues: Fructose-1,6-bisphosphatase, chloroplastic (415 aa).

The N-terminal 57 residues, 1-57 (MASIGPATTTAVKLRSSIFNPQSSTLSPSQQCITFTKSLHSFPTATRHNVASGVRCM), are a transit peptide targeting the chloroplast. 5 residues coordinate Mg(2+): E135, E164, D185, L187, and D188. 188–191 (DGSS) is a binding site for substrate. The interval 207–232 (SPNDECIVDSDHDDESQLSAEEQRCV) is involved in light regulation. A disulfide bond links C231 and C236. Substrate is bound by residues N295, Y327, Y345, Y347, and K357. A Mg(2+)-binding site is contributed by E363.

It belongs to the FBPase class 1 family. In terms of assembly, homotetramer. Requires Mg(2+) as cofactor.

It is found in the plastid. The protein resides in the chloroplast. The enzyme catalyses beta-D-fructose 1,6-bisphosphate + H2O = beta-D-fructose 6-phosphate + phosphate. It functions in the pathway carbohydrate biosynthesis; Calvin cycle. This Spinacia oleracea (Spinach) protein is Fructose-1,6-bisphosphatase, chloroplastic.